The chain runs to 58 residues: Large ribosomal subunit protein eL37 (58 aa).

Zn(2+) contacts are provided by Cys-20, Cys-23, Cys-35, and Cys-38. The C4-type zinc finger occupies 20–38 (CRRCGEKSYHVKKERCSSC). The segment at 39–58 (GFGDSASRRGYAWQSKSGDN) is disordered.

The protein belongs to the eukaryotic ribosomal protein eL37 family. Zn(2+) serves as cofactor.

Binds to the 23S rRNA. The polypeptide is Large ribosomal subunit protein eL37 (Halorubrum lacusprofundi (strain ATCC 49239 / DSM 5036 / JCM 8891 / ACAM 34)).